We begin with the raw amino-acid sequence, 238 residues long: Cysteine-rich venom protein pseudecin (238 aa).

The signal sequence occupies residues 1–19; the sequence is MIAFIVLLSLAAVLQQSSG. Residues 20-28 constitute a propeptide that is removed on maturation; the sequence is TVDFASESS. Positions 38–164 constitute an SCP domain; the sequence is VDKHNALRRS…SSKYLYVCQY (127 aa). Zn(2+) is bound by residues Thr-51 and Ser-106. Disulfide bonds link Cys-75-Cys-153, Cys-92-Cys-165, Cys-148-Cys-162, Cys-184-Cys-191, Cys-187-Cys-196, Cys-200-Cys-233, Cys-209-Cys-227, and Cys-218-Cys-231. One can recognise a ShKT domain in the interval 200-233; sequence CNYNNDFSNCKSLAKKSKCQTEWIKKKCPASCFC.

As to expression, expressed by the venom gland.

The protein resides in the secreted. In terms of biological role, blocks olfactory (CNGA2) and retinal (CNGA1) CNG channel currents. Is really less potent that Pseudechetoxin. Does not affect neither depolarization- nor caffeine-induced contraction of smooth muscle. This chain is Cysteine-rich venom protein pseudecin, found in Pseudechis porphyriacus (Red-bellied black snake).